We begin with the raw amino-acid sequence, 229 residues long: Potassium/proton antiporter CemA (229 aa).

4 helical membrane passes run 6–26, 107–127, 152–172, and 190–210; these read AFIPFLYFTSIVFFPWWISLC, IFNFSTNLISFVILSSYSFWG, FLILLLTDLCIGFHSPHGWEL, and LSGLVSTFPVILDTIFKYWIF.

The protein belongs to the CemA family.

Its subcellular location is the plastid. The protein localises to the chloroplast inner membrane. It catalyses the reaction K(+)(in) + H(+)(out) = K(+)(out) + H(+)(in). Its function is as follows. Contributes to K(+)/H(+) antiport activity by supporting proton efflux to control proton extrusion and homeostasis in chloroplasts in a light-dependent manner to modulate photosynthesis. Prevents excessive induction of non-photochemical quenching (NPQ) under continuous-light conditions. Indirectly promotes efficient inorganic carbon uptake into chloroplasts. The chain is Potassium/proton antiporter CemA from Aethionema cordifolium (Lebanon stonecress).